The sequence spans 694 residues: Elongation factor G 2 (694 aa).

Residues serine 5 to threonine 280 enclose the tr-type G domain. Residues alanine 14 to threonine 21, aspartate 78 to histidine 82, and asparagine 132 to aspartate 135 each bind GTP.

This sequence belongs to the TRAFAC class translation factor GTPase superfamily. Classic translation factor GTPase family. EF-G/EF-2 subfamily.

The protein localises to the cytoplasm. Functionally, catalyzes the GTP-dependent ribosomal translocation step during translation elongation. During this step, the ribosome changes from the pre-translocational (PRE) to the post-translocational (POST) state as the newly formed A-site-bound peptidyl-tRNA and P-site-bound deacylated tRNA move to the P and E sites, respectively. Catalyzes the coordinated movement of the two tRNA molecules, the mRNA and conformational changes in the ribosome. The protein is Elongation factor G 2 of Pseudoalteromonas translucida (strain TAC 125).